Consider the following 249-residue polypeptide: Isoprenyl transferase (249 aa).

Asp25 is a catalytic residue. Residue Asp25 participates in Mg(2+) binding. Residues 26 to 29, Trp30, Arg38, His42, and 70 to 72 each bind substrate; these read GNGR and STE. Asn73 (proton acceptor) is an active-site residue. Residues Trp74, Arg76, Arg197, and 203–205 contribute to the substrate site; that span reads RLS. Residue Glu216 coordinates Mg(2+).

It belongs to the UPP synthase family. In terms of assembly, homodimer. Mg(2+) serves as cofactor.

Its function is as follows. Catalyzes the condensation of isopentenyl diphosphate (IPP) with allylic pyrophosphates generating different type of terpenoids. In Streptococcus thermophilus (strain CNRZ 1066), this protein is Isoprenyl transferase.